Here is a 92-residue protein sequence, read N- to C-terminus: Probable Fe(2+)-trafficking protein (92 aa).

The protein belongs to the Fe(2+)-trafficking protein family.

Functionally, could be a mediator in iron transactions between iron acquisition and iron-requiring processes, such as synthesis and/or repair of Fe-S clusters in biosynthetic enzymes. This Shewanella baltica (strain OS223) protein is Probable Fe(2+)-trafficking protein.